A 350-amino-acid chain; its full sequence is uncharacterized protein (350 aa).

An N-terminal signal peptide occupies residues 1–26; that stretch reads MKKSGWLVVALIALVVLGVVTSIAVN.

This is an uncharacterized protein from Archaeoglobus fulgidus (strain ATCC 49558 / DSM 4304 / JCM 9628 / NBRC 100126 / VC-16).